The following is a 41-amino-acid chain: Photosystem II reaction center protein L (41 aa).

A helical membrane pass occupies residues 20 to 40; it reads SLYWGLLLIFVLAVPFSNYFF.

The protein belongs to the PsbL family. In terms of assembly, PSII is composed of 1 copy each of membrane proteins PsbA, PsbB, PsbC, PsbD, PsbE, PsbF, PsbH, PsbI, PsbJ, PsbK, PsbL, PsbM, PsbT, PsbX, PsbY, PsbZ, Psb30/Ycf12, at least 3 peripheral proteins of the oxygen-evolving complex and a large number of cofactors. It forms dimeric complexes.

It localises to the plastid. The protein resides in the chloroplast thylakoid membrane. Its function is as follows. One of the components of the core complex of photosystem II (PSII). PSII is a light-driven water:plastoquinone oxidoreductase that uses light energy to abstract electrons from H(2)O, generating O(2) and a proton gradient subsequently used for ATP formation. It consists of a core antenna complex that captures photons, and an electron transfer chain that converts photonic excitation into a charge separation. This subunit is found at the monomer-monomer interface and is required for correct PSII assembly and/or dimerization. This chain is Photosystem II reaction center protein L, found in Pinus koraiensis (Korean pine).